A 202-amino-acid polypeptide reads, in one-letter code: Large ribosomal subunit protein bL17 (202 aa).

The segment at 148-202 (DEAPAAESTDAAQVEAGGVEQPDTLPDADAPATADEGVEVDAAEVDPSDEKKDQA) is disordered. The segment covering 169–182 (PDTLPDADAPATAD) has biased composition (low complexity). Over residues 183-194 (EGVEVDAAEVDP) the composition is skewed to acidic residues.

The protein belongs to the bacterial ribosomal protein bL17 family. As to quaternary structure, part of the 50S ribosomal subunit. Contacts protein L32.

This Kineococcus radiotolerans (strain ATCC BAA-149 / DSM 14245 / SRS30216) protein is Large ribosomal subunit protein bL17.